The sequence spans 102 residues: Cytochrome c-553 (102 aa).

An N-terminal signal peptide occupies residues 1–23 (MKRILVVMSICAALAFGVSAAMA). Residues Cys-33, Cys-36, His-37, and Met-80 each coordinate heme c.

In terms of processing, binds 1 heme c group covalently per subunit.

The protein localises to the periplasm. In terms of biological role, natural electron acceptor for a formate dehydrogenase. The polypeptide is Cytochrome c-553 (Nitratidesulfovibrio vulgaris (strain DSM 19637 / Miyazaki F) (Desulfovibrio vulgaris)).